The following is a 639-amino-acid chain: Chaperone protein DnaK 1 (639 aa).

The residue at position 199 (T199) is a Phosphothreonine; by autocatalysis. Residues 603–612 are compositionally biased toward low complexity; it reads QQQAQAQQAP. A disordered region spans residues 603-639; sequence QQQAQAQQAPGGEGEQEAKQDDNVVDAEFEEVKDEKK. The span at 625 to 639 shows a compositional bias: acidic residues; sequence NVVDAEFEEVKDEKK.

Belongs to the heat shock protein 70 family.

Its function is as follows. Acts as a chaperone. The sequence is that of Chaperone protein DnaK 1 from Photobacterium profundum (strain SS9).